The chain runs to 350 residues: fMet-Leu-Phe receptor (350 aa).

The Extracellular segment spans residues 1-27 (METNSSLPTNISGGTPAVSAGYLFLDI). Asparagine 4 and asparagine 10 each carry an N-linked (GlcNAc...) asparagine glycan. Residues 28 to 50 (ITYLVFAVTFVLGVLGNGLVIWV) traverse the membrane as a helical segment. The Cytoplasmic segment spans residues 51 to 61 (AGFRMTHTVTT). A helical membrane pass occupies residues 62–83 (ISYLNLAVADFCFTSTLPFFMV). Topologically, residues 84–100 (RKAMGGHWPFGWFLCKF) are extracellular. The cysteines at positions 98 and 176 are disulfide-linked. The helical transmembrane segment at 101-121 (VFTIVDINLFGSVFLIALIAL) threads the bilayer. Residues 122-140 (DRCVCVLHPVWTQNHRTVS) lie on the Cytoplasmic side of the membrane. Residues 141–162 (LAKKVIIGPWVMALLLTLPVII) traverse the membrane as a helical segment. Over 163-205 (RVTTVPGKTGTVACTFNFSPWTNDPKERINVAVAMLTVRGIIR) the chain is Extracellular. The helical transmembrane segment at 206–226 (FIIGFSAPMSIVAVSYGLIAT) threads the bilayer. At 227 to 242 (KIHKQGLIKSSRPLRV) the chain is on the cytoplasmic side. Residues 243–266 (LSFVAAAFFLCWSPYQVVALIATV) traverse the membrane as a helical segment. Residues 267 to 285 (RIRELLQGMYKEIGIAVDV) lie on the Extracellular side of the membrane. A helical transmembrane segment spans residues 286-305 (TSALAFFNSCLNPMLYVFMG). At 306–350 (QDFRERLIHALPASLERALTEDSTQTSDTATNSTLPSAEVELQAK) the chain is on the cytoplasmic side. Positions 325–350 (TEDSTQTSDTATNSTLPSAEVELQAK) are disordered. The segment covering 326 to 341 (EDSTQTSDTATNSTLP) has biased composition (polar residues). Position 328 is a phosphoserine (serine 328). Phosphothreonine occurs at positions 329 and 331. Phosphoserine is present on serine 332. A phosphothreonine mark is found at threonine 334 and threonine 336. The residue at position 338 (serine 338) is a Phosphoserine. At threonine 339 the chain carries Phosphothreonine.

Belongs to the G-protein coupled receptor 1 family. In terms of assembly, interacts with S.aureus chemotaxis inhibitory protein (CHIPS); the interaction blocks the receptor and may thus inhibit the immune response. Post-translationally, phosphorylated; which is necessary for desensitization. As to expression, neutrophils.

It localises to the cell membrane. In terms of biological role, high affinity receptor for N-formyl-methionyl peptides (fMLP), which are powerful neutrophil chemotactic factors. Binding of fMLP to the receptor stimulates intracellular calcium mobilization and superoxide anion release. This response is mediated via a G-protein that activates a phosphatidylinositol-calcium second messenger system. Receptor for TAFA4, mediates its effects on chemoattracting macrophages, promoting phagocytosis and increasing ROS release. Receptor for cathepsin CTSG, leading to increased phagocyte chemotaxis. The polypeptide is fMet-Leu-Phe receptor (FPR1) (Homo sapiens (Human)).